The following is a 472-amino-acid chain: Ribosomal protein uS12 methylthiotransferase RimO (472 aa).

One can recognise an MTTase N-terminal domain in the interval 22–133; sequence PSVAFAHLGC…IVDVLKRVEA (112 aa). Cys31, Cys67, Cys96, Cys171, Cys175, and Cys178 together coordinate [4Fe-4S] cluster. The 230-residue stretch at 157 to 386 folds into the Radical SAM core domain; sequence TTDQAVAYLK…MALQQPISAE (230 aa). In terms of domain architecture, TRAM spans 389–460; sequence QRWVGRTIDV…VYDLTGQLVD (72 aa).

It belongs to the methylthiotransferase family. RimO subfamily. Requires [4Fe-4S] cluster as cofactor.

It localises to the cytoplasm. The enzyme catalyses L-aspartate(89)-[ribosomal protein uS12]-hydrogen + (sulfur carrier)-SH + AH2 + 2 S-adenosyl-L-methionine = 3-methylsulfanyl-L-aspartate(89)-[ribosomal protein uS12]-hydrogen + (sulfur carrier)-H + 5'-deoxyadenosine + L-methionine + A + S-adenosyl-L-homocysteine + 2 H(+). Its function is as follows. Catalyzes the methylthiolation of an aspartic acid residue of ribosomal protein uS12. In Prochlorococcus marinus (strain MIT 9303), this protein is Ribosomal protein uS12 methylthiotransferase RimO.